We begin with the raw amino-acid sequence, 393 residues long: Large ribosomal subunit protein uL2m (393 aa).

The transit peptide at 1-43 (MLVLGSLRSALSCSSTASLISKRNPCYPYGILCRTLSQSVKLW) directs the protein to the mitochondrion. The segment at 337–393 (AMNKCDHPHGGGRGKSKSNKLSMSPWGQLAKGYKTRRGKNQNRMKVKDRPRGKDARL) is disordered. Residues 369–380 (YKTRRGKNQNRM) are compositionally biased toward basic residues. Positions 381–393 (KVKDRPRGKDARL) are enriched in basic and acidic residues.

The protein belongs to the universal ribosomal protein uL2 family. In terms of assembly, component of the mitochondrial large ribosomal subunit (mt-LSU). Mature yeast 74S mitochondrial ribosomes consist of a small (37S) and a large (54S) subunit. The 37S small subunit contains a 15S ribosomal RNA (15S mt-rRNA) and 34 different proteins. The 54S large subunit contains a 21S rRNA (21S mt-rRNA) and 46 different proteins. uL2m has a Na/K ligand binding site.

The protein localises to the mitochondrion. Component of the mitochondrial ribosome (mitoribosome), a dedicated translation machinery responsible for the synthesis of mitochondrial genome-encoded proteins, including at least some of the essential transmembrane subunits of the mitochondrial respiratory chain. The mitoribosomes are attached to the mitochondrial inner membrane and translation products are cotranslationally integrated into the membrane. The protein is Large ribosomal subunit protein uL2m (RML2) of Saccharomyces cerevisiae (strain ATCC 204508 / S288c) (Baker's yeast).